A 113-amino-acid polypeptide reads, in one-letter code: Endoribonuclease SymE (113 aa).

Residues 29–74 form the SpoVT-AbrB domain; sequence SRYPDYSRIPAITLKGQWLEAAGFATGTAVDVKVMEGCIVLTAQPP.

Belongs to the SymE family.

It is found in the cytoplasm. Functionally, involved in the degradation and recycling of damaged RNA. It is itself a target for degradation by the ATP-dependent protease Lon. The sequence is that of Endoribonuclease SymE from Escherichia coli O6:K15:H31 (strain 536 / UPEC).